The primary structure comprises 113 residues: U11-theraphotoxin-Hhn1u (113 aa).

Residues Met1 to Ala21 form the signal peptide. A propeptide spanning residues Asp22–Arg74 is cleaved from the precursor. 3 disulfide bridges follow: Cys75/Cys90, Cys82/Cys95, and Cys89/Cys110.

It belongs to the neurotoxin 14 (magi-1) family. 01 (HNTX-16) subfamily. In terms of tissue distribution, expressed by the venom gland.

The protein localises to the secreted. Functionally, probable ion channel inhibitor. This Cyriopagopus hainanus (Chinese bird spider) protein is U11-theraphotoxin-Hhn1u.